The sequence spans 419 residues: tRNA(Met) cytidine acetate ligase (419 aa).

ATP is bound by residues 7 to 20 (ITEYNPFHNGHLHH), glycine 101, asparagine 163, and arginine 188.

This sequence belongs to the TmcAL family.

It is found in the cytoplasm. The catalysed reaction is cytidine(34) in elongator tRNA(Met) + acetate + ATP = N(4)-acetylcytidine(34) in elongator tRNA(Met) + AMP + diphosphate. In terms of biological role, catalyzes the formation of N(4)-acetylcytidine (ac(4)C) at the wobble position of elongator tRNA(Met), using acetate and ATP as substrates. First activates an acetate ion to form acetyladenylate (Ac-AMP) and then transfers the acetyl group to tRNA to form ac(4)C34. The polypeptide is tRNA(Met) cytidine acetate ligase (Syntrophotalea carbinolica (strain DSM 2380 / NBRC 103641 / GraBd1) (Pelobacter carbinolicus)).